The chain runs to 62 residues: Small ribosomal subunit protein eS27 (62 aa).

Zn(2+) is bound by residues Cys17, Cys20, Cys36, and Cys39. The segment at 17-39 (CPDCDNEQTVFSKASTTVKCVVC) adopts a C4-type zinc-finger fold.

Belongs to the eukaryotic ribosomal protein eS27 family. Part of the 30S ribosomal subunit. Zn(2+) serves as cofactor.

The sequence is that of Small ribosomal subunit protein eS27 from Methanoregula boonei (strain DSM 21154 / JCM 14090 / 6A8).